A 317-amino-acid polypeptide reads, in one-letter code: Melanocyte-stimulating hormone receptor (317 aa).

Over 1–37 (MPMQGAQRKLLGSLNSTPTATSNLGLAANHTGAPCLE) the chain is Extracellular. The N-linked (GlcNAc...) asparagine glycan is linked to asparagine 29. A helical transmembrane segment spans residues 38-63 (VSIPDGLFLSLGLVSLVENVLVVAAI). Topologically, residues 64 to 72 (AKNRNLHSS) are cytoplasmic. A helical transmembrane segment spans residues 73 to 93 (MYCFICCLALSDLLVSGSNML). The Extracellular segment spans residues 94–118 (ETAVILLLEAGALATRTSAVQRLHN). A helical transmembrane segment spans residues 119–140 (TIDVLTCSSMLCSLCFLGAIAV). Topologically, residues 141–163 (DRYISIFYALRYHSIVTLPRTQR) are cytoplasmic. Residues 164-183 (VIAAIWVASVLSSTLFITYY) form a helical membrane-spanning segment. Topologically, residues 184-191 (DHAAVLLC) are extracellular. The helical transmembrane segment at 192-211 (LVVFFLAMLVLMAVLYVHML) threads the bilayer. Over 212 to 240 (ARACQHAHGIIRLHKRQSPAHQGFGLRGA) the chain is Cytoplasmic. A helical transmembrane segment spans residues 241–266 (ATLTILLGIFFLCWGPFFLHLTLVVF). Over 267 to 279 (CPQHLTCSCIFKN) the chain is Extracellular. Residues 280–300 (FKVFLTLIICNTIIDPLIYAF) form a helical membrane-spanning segment. The Cytoplasmic portion of the chain corresponds to 301-317 (RSQELRRTLKEVLLCSW). Cysteine 315 carries S-palmitoyl cysteine lipidation.

Belongs to the G-protein coupled receptor 1 family. In terms of assembly, interacts with MGRN1, but does not undergo MGRN1-mediated ubiquitination; this interaction competes with GNAS-binding and thus inhibits agonist-induced cAMP production. Interacts with OPN3; the interaction results in a decrease in MC1R-mediated cAMP signaling and ultimately a decrease in melanin production in melanocytes.

It is found in the cell membrane. In terms of biological role, receptor for MSH (alpha, beta and gamma) and ACTH. The activity of this receptor is mediated by G proteins which activate adenylate cyclase. Mediates melanogenesis, the production of eumelanin (black/brown) and phaeomelanin (red/yellow), via regulation of cAMP signaling in melanocytes. The polypeptide is Melanocyte-stimulating hormone receptor (MC1R) (Saguinus imperator (Emperor tamarin)).